We begin with the raw amino-acid sequence, 201 residues long: ATP-dependent Clp protease proteolytic subunit 2 (201 aa).

Ser101 serves as the catalytic Nucleophile. The active site involves His126.

This sequence belongs to the peptidase S14 family. As to quaternary structure, fourteen ClpP subunits assemble into 2 heptameric rings which stack back to back to give a disk-like structure with a central cavity, resembling the structure of eukaryotic proteasomes.

The protein resides in the cytoplasm. It catalyses the reaction Hydrolysis of proteins to small peptides in the presence of ATP and magnesium. alpha-casein is the usual test substrate. In the absence of ATP, only oligopeptides shorter than five residues are hydrolyzed (such as succinyl-Leu-Tyr-|-NHMec, and Leu-Tyr-Leu-|-Tyr-Trp, in which cleavage of the -Tyr-|-Leu- and -Tyr-|-Trp bonds also occurs).. In terms of biological role, cleaves peptides in various proteins in a process that requires ATP hydrolysis. Has a chymotrypsin-like activity. Plays a major role in the degradation of misfolded proteins. This Prochlorococcus marinus subsp. pastoris (strain CCMP1986 / NIES-2087 / MED4) protein is ATP-dependent Clp protease proteolytic subunit 2.